A 196-amino-acid chain; its full sequence is Imidazole glycerol phosphate synthase subunit HisH (196 aa).

A Glutamine amidotransferase type-1 domain is found at 2-196; that stretch reads NVVIVDTECA…LKRFLELTLC (195 aa). Residue C77 is the Nucleophile of the active site. Residues H175 and E177 contribute to the active site.

Heterodimer of HisH and HisF.

It is found in the cytoplasm. The enzyme catalyses 5-[(5-phospho-1-deoxy-D-ribulos-1-ylimino)methylamino]-1-(5-phospho-beta-D-ribosyl)imidazole-4-carboxamide + L-glutamine = D-erythro-1-(imidazol-4-yl)glycerol 3-phosphate + 5-amino-1-(5-phospho-beta-D-ribosyl)imidazole-4-carboxamide + L-glutamate + H(+). It carries out the reaction L-glutamine + H2O = L-glutamate + NH4(+). Its pathway is amino-acid biosynthesis; L-histidine biosynthesis; L-histidine from 5-phospho-alpha-D-ribose 1-diphosphate: step 5/9. Its function is as follows. IGPS catalyzes the conversion of PRFAR and glutamine to IGP, AICAR and glutamate. The HisH subunit catalyzes the hydrolysis of glutamine to glutamate and ammonia as part of the synthesis of IGP and AICAR. The resulting ammonia molecule is channeled to the active site of HisF. The polypeptide is Imidazole glycerol phosphate synthase subunit HisH (Idiomarina loihiensis (strain ATCC BAA-735 / DSM 15497 / L2-TR)).